A 292-amino-acid chain; its full sequence is ATP synthase gamma chain (292 aa).

Belongs to the ATPase gamma chain family. As to quaternary structure, F-type ATPases have 2 components, CF(1) - the catalytic core - and CF(0) - the membrane proton channel. CF(1) has five subunits: alpha(3), beta(3), gamma(1), delta(1), epsilon(1). CF(0) has three main subunits: a, b and c.

Its subcellular location is the cell membrane. Its function is as follows. Produces ATP from ADP in the presence of a proton gradient across the membrane. The gamma chain is believed to be important in regulating ATPase activity and the flow of protons through the CF(0) complex. The sequence is that of ATP synthase gamma chain from Streptococcus mutans serotype c (strain ATCC 700610 / UA159).